Consider the following 383-residue polypeptide: Protein RecA (383 aa).

Position 79–86 (79–86 (GPESSGKT)) interacts with ATP. Residues 347 to 369 (IEEDNTEEKQSSKEKETDEKADK) are disordered. Residues 353–369 (EEKQSSKEKETDEKADK) are compositionally biased toward basic and acidic residues.

Belongs to the RecA family.

The protein localises to the cytoplasm. Can catalyze the hydrolysis of ATP in the presence of single-stranded DNA, the ATP-dependent uptake of single-stranded DNA by duplex DNA, and the ATP-dependent hybridization of homologous single-stranded DNAs. It interacts with LexA causing its activation and leading to its autocatalytic cleavage. In Streptococcus mutans serotype c (strain ATCC 700610 / UA159), this protein is Protein RecA.